Reading from the N-terminus, the 288-residue chain is AA9 family lytic polysaccharide monooxygenase A (288 aa).

Positions 1-22 are cleaved as a signal peptide; it reads MKSTSATKFSVLAAATFAAAHG. H21 and H104 together coordinate Cu(2+). Intrachain disulfides connect C74/C191 and C115/C119. N151 is a glycosylation site (N-linked (GlcNAc...) asparagine). O2 contacts are provided by H177 and Q186. Y188 provides a ligand contact to Cu(2+). The tract at residues 236–270 is disordered; the sequence is PEPYKSGSGSSDNAAEAVSSAAAEEPAAAATSAAA. A compositionally biased stretch (low complexity) spans 249–270; it reads AAEAVSSAAAEEPAAAATSAAA.

This sequence belongs to the polysaccharide monooxygenase AA9 family. Cu(2+) serves as cofactor.

It is found in the secreted. It carries out the reaction [(1-&gt;4)-beta-D-glucosyl]n+m + reduced acceptor + O2 = 4-dehydro-beta-D-glucosyl-[(1-&gt;4)-beta-D-glucosyl]n-1 + [(1-&gt;4)-beta-D-glucosyl]m + acceptor + H2O.. Its function is as follows. Lytic polysaccharide monooxygenase (LPMO) that depolymerizes crystalline and amorphous polysaccharides via the oxidation of scissile alpha- or beta-(1-4)-glycosidic bonds, yielding C1 and C4 oxidation products. Catalysis by LPMOs requires the reduction of the active-site copper from Cu(II) to Cu(I) by a reducing agent and H(2)O(2) or O(2) as a cosubstrate. Active on cellulose and on xyloglucan for deconstruction of plant biomass. The chain is AA9 family lytic polysaccharide monooxygenase A from Geotrichum candidum (Oospora lactis).